The sequence spans 199 residues: 7-methyl-GTP pyrophosphatase (199 aa).

Residue D76 is the Proton acceptor of the active site.

Belongs to the Maf family. YceF subfamily. The cofactor is a divalent metal cation.

It is found in the cytoplasm. The catalysed reaction is N(7)-methyl-GTP + H2O = N(7)-methyl-GMP + diphosphate + H(+). Its function is as follows. Nucleoside triphosphate pyrophosphatase that hydrolyzes 7-methyl-GTP (m(7)GTP). May have a dual role in cell division arrest and in preventing the incorporation of modified nucleotides into cellular nucleic acids. The chain is 7-methyl-GTP pyrophosphatase from Brucella abortus biovar 1 (strain 9-941).